Consider the following 40-residue polypeptide: Photosystem II reaction center protein T (40 aa).

Residues 3 to 23 (ALVYTFLLVGTLGIIFFAIFF) form a helical membrane-spanning segment.

This sequence belongs to the PsbT family. PSII is composed of 1 copy each of membrane proteins PsbA, PsbB, PsbC, PsbD, PsbE, PsbF, PsbH, PsbI, PsbJ, PsbK, PsbL, PsbM, PsbT, PsbY, PsbZ, Psb30/Ycf12, at least 3 peripheral proteins of the oxygen-evolving complex and a large number of cofactors. It forms dimeric complexes.

It localises to the plastid. The protein resides in the chloroplast thylakoid membrane. Its function is as follows. Found at the monomer-monomer interface of the photosystem II (PS II) dimer, plays a role in assembly and dimerization of PSII. PSII is a light-driven water plastoquinone oxidoreductase, using light energy to abstract electrons from H(2)O, generating a proton gradient subsequently used for ATP formation. The sequence is that of Photosystem II reaction center protein T from Anthoceros angustus (Hornwort).